Consider the following 759-residue polypeptide: Serine/threonine-protein kinase HRK1 (759 aa).

The interval 1 to 32 is disordered; it reads MPNLLSRNPFHGHHNDHHHDRENSSNNPPQLI. Serine 37 is modified (phosphoserine). The interval 45 to 162 is disordered; that stretch reads KQSNDSLRSE…PPPSKSTSTV (118 aa). The span at 59–97 shows a compositional bias: low complexity; the sequence is SMKSTTTTTNYTTTNLNNNTHSHSNATSISTNNYNNNYE. A compositionally biased stretch (polar residues) spans 113–122; sequence SPASPKQTHS. Positions 215–722 constitute a Protein kinase domain; it reads GKLGKLLGSG…LDDIFNDEWF (508 aa). Residues 221 to 229 and lysine 244 each bind ATP; that span reads LGSGAGGSV. Aspartate 340 acts as the Proton acceptor in catalysis. A phosphoserine mark is found at serine 382 and serine 472. Over residues 493–502 the composition is skewed to polar residues; it reads PNTPASIQGK. Disordered stretches follow at residues 493-578 and 614-682; these read PNTP…GRVD and AANA…KIIH. Position 495 is a phosphothreonine (threonine 495). The residue at position 498 (serine 498) is a Phosphoserine. Residues 510 to 519 show a composition bias toward acidic residues; it reads VEEETEENKE. The span at 520 to 547 shows a compositional bias: basic and acidic residues; the sequence is DDSNNDKESTPDNDKESTIDIKISKNEN. Over residues 614–646 the composition is skewed to low complexity; it reads AANANPDMVPQNNPQQQQQQQQQQQQQQQQQQQ. A compositionally biased stretch (polar residues) spans 663–672; the sequence is ASDNKSSQQH.

It belongs to the protein kinase superfamily. Ser/Thr protein kinase family.

The protein localises to the cytoplasm. It carries out the reaction L-seryl-[protein] + ATP = O-phospho-L-seryl-[protein] + ADP + H(+). It catalyses the reaction L-threonyl-[protein] + ATP = O-phospho-L-threonyl-[protein] + ADP + H(+). Functionally, involved in regulating the activity of the plasma membrane proton pump PMA1. This Saccharomyces cerevisiae (strain ATCC 204508 / S288c) (Baker's yeast) protein is Serine/threonine-protein kinase HRK1 (HRK1).